Here is a 62-residue protein sequence, read N- to C-terminus: Chromatin protein Cren7 2 (62 aa).

The protein belongs to the Cren7 family. Monomer. In terms of processing, methylated at multiple sites, to varying extents.

The protein localises to the chromosome. It localises to the cytoplasm. Its function is as follows. A chromatin protein, binds double-stranded DNA without sequence specificity. Constrains negative DNA supercoils. This Hyperthermus butylicus (strain DSM 5456 / JCM 9403 / PLM1-5) protein is Chromatin protein Cren7 2 (cren7-2).